The sequence spans 468 residues: Adenylyltransferase and sulfurtransferase MOCS3-1 (468 aa).

Residues Gly-111, Asp-132, 139-143 (NNLHR), Lys-156, and 200-201 (DN) contribute to the ATP site. Zn(2+) contacts are provided by Cys-241 and Cys-244. Cys-258 (glycyl thioester intermediate; for adenylyltransferase activity) is an active-site residue. Residues Cys-316 and Cys-319 each coordinate Zn(2+). One can recognise a Rhodanese domain in the interval 371–466 (DGEPHLLLDV…WGRDVDPDFP (96 aa)). Cys-426 (cysteine persulfide intermediate; for sulfurtransferase activity) is an active-site residue.

In the N-terminal section; belongs to the HesA/MoeB/ThiF family. UBA4 subfamily. Zn(2+) serves as cofactor.

The protein resides in the cytoplasm. The catalysed reaction is [molybdopterin-synthase sulfur-carrier protein]-C-terminal Gly-Gly + ATP + H(+) = [molybdopterin-synthase sulfur-carrier protein]-C-terminal Gly-Gly-AMP + diphosphate. The enzyme catalyses [molybdopterin-synthase sulfur-carrier protein]-C-terminal Gly-Gly-AMP + S-sulfanyl-L-cysteinyl-[cysteine desulfurase] + AH2 = [molybdopterin-synthase sulfur-carrier protein]-C-terminal-Gly-aminoethanethioate + L-cysteinyl-[cysteine desulfurase] + A + AMP + 2 H(+). It participates in tRNA modification; 5-methoxycarbonylmethyl-2-thiouridine-tRNA biosynthesis. It functions in the pathway cofactor biosynthesis; molybdopterin biosynthesis. Functionally, plays a central role in 2-thiolation of mcm(5)S(2)U at tRNA wobble positions of cytosolic tRNA(Lys), tRNA(Glu) and tRNA(Gln). Also essential during biosynthesis of the molybdenum cofactor. Acts by mediating the C-terminal thiocarboxylation of sulfur carriers URM1 and MOCS2A. Its N-terminus first activates URM1 and MOCS2A as acyl-adenylates (-COAMP), then the persulfide sulfur on the catalytic cysteine is transferred to URM1 and MOCS2A to form thiocarboxylation (-COSH) of their C-terminus. The reaction probably involves hydrogen sulfide that is generated from the persulfide intermediate and that acts as a nucleophile towards URM1 and MOCS2A. Subsequently, a transient disulfide bond is formed. Does not use thiosulfate as sulfur donor; NFS1 probably acting as a sulfur donor for thiocarboxylation reactions. The protein is Adenylyltransferase and sulfurtransferase MOCS3-1 of Zea mays (Maize).